Here is a 371-residue protein sequence, read N- to C-terminus: 4-hydroxy-3-methylbut-2-en-1-yl diphosphate synthase (flavodoxin) (371 aa).

Cys-272, Cys-275, Cys-307, and Glu-314 together coordinate [4Fe-4S] cluster.

Belongs to the IspG family. [4Fe-4S] cluster serves as cofactor.

It carries out the reaction (2E)-4-hydroxy-3-methylbut-2-enyl diphosphate + oxidized [flavodoxin] + H2O + 2 H(+) = 2-C-methyl-D-erythritol 2,4-cyclic diphosphate + reduced [flavodoxin]. It functions in the pathway isoprenoid biosynthesis; isopentenyl diphosphate biosynthesis via DXP pathway; isopentenyl diphosphate from 1-deoxy-D-xylulose 5-phosphate: step 5/6. In terms of biological role, converts 2C-methyl-D-erythritol 2,4-cyclodiphosphate (ME-2,4cPP) into 1-hydroxy-2-methyl-2-(E)-butenyl 4-diphosphate. This is 4-hydroxy-3-methylbut-2-en-1-yl diphosphate synthase (flavodoxin) from Pseudomonas aeruginosa (strain LESB58).